The sequence spans 277 residues: Bifunctional protein FolD (277 aa).

NADP(+)-binding positions include 164–166 (GRS), serine 189, and valine 230.

The protein belongs to the tetrahydrofolate dehydrogenase/cyclohydrolase family. As to quaternary structure, homodimer.

It catalyses the reaction (6R)-5,10-methylene-5,6,7,8-tetrahydrofolate + NADP(+) = (6R)-5,10-methenyltetrahydrofolate + NADPH. The catalysed reaction is (6R)-5,10-methenyltetrahydrofolate + H2O = (6R)-10-formyltetrahydrofolate + H(+). It participates in one-carbon metabolism; tetrahydrofolate interconversion. Catalyzes the oxidation of 5,10-methylenetetrahydrofolate to 5,10-methenyltetrahydrofolate and then the hydrolysis of 5,10-methenyltetrahydrofolate to 10-formyltetrahydrofolate. The chain is Bifunctional protein FolD from Exiguobacterium sibiricum (strain DSM 17290 / CCUG 55495 / CIP 109462 / JCM 13490 / 255-15).